The sequence spans 244 residues: tRNA pseudouridine synthase A (244 aa).

Aspartate 52 (nucleophile) is an active-site residue. A substrate-binding site is contributed by tyrosine 110.

This sequence belongs to the tRNA pseudouridine synthase TruA family. Homodimer.

The catalysed reaction is uridine(38/39/40) in tRNA = pseudouridine(38/39/40) in tRNA. In terms of biological role, formation of pseudouridine at positions 38, 39 and 40 in the anticodon stem and loop of transfer RNAs. The protein is tRNA pseudouridine synthase A of Brevibacillus brevis (strain 47 / JCM 6285 / NBRC 100599).